The following is a 530-amino-acid chain: MGDDSLYLGGEWQFNHFSKLTSSRPDAAFAEIQRTSLPEKSPLSSETRVDLCDDLAPVARQLAPREKLPLSSRRPAAVGAGLQNMGNTCYENASLQCLTYTLPLANYMLSREHSQTCQRPKCCMLCTMQAHITWALHSPGHVIQPSQALAAGFHRGKQEDVHEFLMFTVDAMKKACLPGHKQVDHHCKDTTLIHQIFGGCWRSQIKCLHCHGISDTFDPYLDIALDIQAAQSVKQALEQLVKPEELNGENAYHCGLCLQRAPASNTLTLHTSAKVLILVLKRFSDVAGNKLAKNVQYPECLDMQPYMSQQNTGPLVYVLYAVLVHAGWSCHDGHYFSYVKAQEVQWYKMDDAEVTVCSIISVLSQQAYVLFYIQKSEWERHSESVSRGREPRALGAEDTDRRAKQGELKRDHPCLQAPELDEHLVERATQESTLDHWKFLQEQNKTKPEFNVGKVEGTLPPNALVIHQSKYKCGMKNHHPEQQSSLLNLSSTTRTDQESMNTGTLASLQGRTRRAKGKNKHSKRALLVCQ.

Residues 80-375 form the USP domain; that stretch reads AGLQNMGNTC…QAYVLFYIQK (296 aa). Catalysis depends on C89, which acts as the Nucleophile. Residue H334 is the Proton acceptor of the active site. Basic and acidic residues-rich tracts occupy residues 382–392 and 398–411; these read SESVSRGREPR and DTDRRAKQGELKRD. The interval 382–411 is disordered; sequence SESVSRGREPRALGAEDTDRRAKQGELKRD.

The protein belongs to the peptidase C19 family. USP17 subfamily.

Its subcellular location is the nucleus. The protein resides in the endoplasmic reticulum. The catalysed reaction is Thiol-dependent hydrolysis of ester, thioester, amide, peptide and isopeptide bonds formed by the C-terminal Gly of ubiquitin (a 76-residue protein attached to proteins as an intracellular targeting signal).. Functionally, deubiquitinating enzyme that removes conjugated ubiquitin from specific proteins to regulate different cellular processes that may include cell proliferation, progression through the cell cycle, apoptosis, cell migration, and the cellular response to viral infection. This is Ubiquitin carboxyl-terminal hydrolase 17-like protein 1 (USP17L1) from Homo sapiens (Human).